Here is a 72-residue protein sequence, read N- to C-terminus: NAD(P)H-quinone oxidoreductase subunit O (72 aa).

This sequence belongs to the complex I NdhO subunit family. NDH-1 can be composed of about 15 different subunits; different subcomplexes with different compositions have been identified which probably have different functions.

It is found in the cellular thylakoid membrane. It catalyses the reaction a plastoquinone + NADH + (n+1) H(+)(in) = a plastoquinol + NAD(+) + n H(+)(out). The catalysed reaction is a plastoquinone + NADPH + (n+1) H(+)(in) = a plastoquinol + NADP(+) + n H(+)(out). Functionally, NDH-1 shuttles electrons from an unknown electron donor, via FMN and iron-sulfur (Fe-S) centers, to quinones in the respiratory and/or the photosynthetic chain. The immediate electron acceptor for the enzyme in this species is believed to be plastoquinone. Couples the redox reaction to proton translocation, and thus conserves the redox energy in a proton gradient. Cyanobacterial NDH-1 also plays a role in inorganic carbon-concentration. The polypeptide is NAD(P)H-quinone oxidoreductase subunit O (Rippkaea orientalis (strain PCC 8801 / RF-1) (Cyanothece sp. (strain PCC 8801))).